The sequence spans 199 residues: Single-stranded DNA cytosine deaminase (199 aa).

Residues 1–30 (MDSLLKKQRQFLYQFKNVRWAKGRHETYLC) carry the Bipartite nuclear localization signal motif. Residues 2–26 (DSLLKKQRQFLYQFKNVRWAKGRHE) are interaction with SUPT6H. One can recognise a CMP/dCMP-type deaminase domain in the interval 23-130 (GRHETYLCYV…KAEPEGLRRL (108 aa)). At threonine 27 the chain carries Phosphothreonine; by PKA. Serine 38 carries the post-translational modification Phosphoserine; by PKA. The segment at 39-42 (PTSF) is important for interaction with CTNNBL1. Histidine 56 is a Zn(2+) binding site. Glutamate 58 (proton donor) is an active-site residue. Cysteine 87 and cysteine 90 together coordinate Zn(2+). A required for interaction with RNF126 region spans residues 88 to 116 (YDCARHVADFLRGYPNLSLRIFTARLYFC). The short motif at 184-199 (LYEVDDLRDAFRTLGL) is the Nuclear export signal element.

The protein belongs to the cytidine and deoxycytidylate deaminase family. Interacts with CTNNBL1; the interaction is important for the immunoglobulin switch activity of AICDA. Interacts (via its NLS) with KPNA1. Interacts with PKA/PRKACA and PRKAR1A/PKR1. Interacts with SUPT6H, TRIM28 and NCL. Directly interacts with MCM3AP; this interaction may favor AICDA recruitment to immunoglobulin variable region genes, hence promoting somatic hypermutations. Zn(2+) serves as cofactor. In terms of processing, ser-38 is the major site whereas Thr-27 is the minor site of phosphorylation. Phosphorylation regulates its class-switch recombination activity. Post-translationally, probably monoubiquitinated on several residues by RNF126. Expressed in lymph nodes, spleen and thymus.

Its subcellular location is the nucleus. It localises to the cytoplasm. The catalysed reaction is a 2'-deoxycytidine in single-stranded DNA + H2O + H(+) = a 2'-deoxyuridine in single-stranded DNA + NH4(+). Functionally, single-stranded DNA-specific cytidine deaminase. Involved in somatic hypermutation (SHM), gene conversion, and class-switch recombination (CSR) in B-lymphocytes by deaminating C to U during transcription of Ig-variable (V) and Ig-switch (S) region DNA. Required for several crucial steps of B-cell terminal differentiation necessary for efficient antibody responses. May also play a role in the epigenetic regulation of gene expression by participating in DNA demethylation. This is Single-stranded DNA cytosine deaminase (AICDA) from Bos taurus (Bovine).